A 552-amino-acid chain; its full sequence is (R)-mandelonitrile lyase-like (552 aa).

An N-terminal signal peptide occupies residues 1-28 (MTKRIDSSLLYTALVVLLLLGVVHRSNA). The N-linked (GlcNAc...) asparagine glycan is linked to N44. FAD is bound at residue 55–82 (DYIIVGGGTAGCPLAATLSQSFRVLLLE). N162, N259, and N434 each carry an N-linked (GlcNAc...) asparagine glycan. The Proton acceptor role is filled by H492.

It belongs to the GMC oxidoreductase family. As to quaternary structure, monomer. The cofactor is FAD. In terms of processing, glycosylated.

It catalyses the reaction (R)-mandelonitrile = benzaldehyde + hydrogen cyanide. The polypeptide is (R)-mandelonitrile lyase-like (Arabidopsis thaliana (Mouse-ear cress)).